A 72-amino-acid polypeptide reads, in one-letter code: UPF0346 protein EF_1680 (72 aa).

Belongs to the UPF0346 family.

The polypeptide is UPF0346 protein EF_1680 (Enterococcus faecalis (strain ATCC 700802 / V583)).